A 149-amino-acid chain; its full sequence is Nucleoside diphosphate kinase (149 aa).

Lysine 9, phenylalanine 57, arginine 85, threonine 91, arginine 102, and asparagine 112 together coordinate ATP. Histidine 115 acts as the Pros-phosphohistidine intermediate in catalysis.

This sequence belongs to the NDK family. Homotetramer. The cofactor is Mg(2+).

Its subcellular location is the cytoplasm. The enzyme catalyses a 2'-deoxyribonucleoside 5'-diphosphate + ATP = a 2'-deoxyribonucleoside 5'-triphosphate + ADP. The catalysed reaction is a ribonucleoside 5'-diphosphate + ATP = a ribonucleoside 5'-triphosphate + ADP. Major role in the synthesis of nucleoside triphosphates other than ATP. The ATP gamma phosphate is transferred to the NDP beta phosphate via a ping-pong mechanism, using a phosphorylated active-site intermediate. The sequence is that of Nucleoside diphosphate kinase from Roseiflexus castenholzii (strain DSM 13941 / HLO8).